Reading from the N-terminus, the 465-residue chain is ATP synthase subunit beta (465 aa).

Residue 154–161 participates in ATP binding; it reads GGAGVGKT.

This sequence belongs to the ATPase alpha/beta chains family. F-type ATPases have 2 components, CF(1) - the catalytic core - and CF(0) - the membrane proton channel. CF(1) has five subunits: alpha(3), beta(3), gamma(1), delta(1), epsilon(1). CF(0) has three main subunits: a(1), b(2) and c(9-12). The alpha and beta chains form an alternating ring which encloses part of the gamma chain. CF(1) is attached to CF(0) by a central stalk formed by the gamma and epsilon chains, while a peripheral stalk is formed by the delta and b chains.

The protein localises to the cell inner membrane. It catalyses the reaction ATP + H2O + 4 H(+)(in) = ADP + phosphate + 5 H(+)(out). Its function is as follows. Produces ATP from ADP in the presence of a proton gradient across the membrane. The catalytic sites are hosted primarily by the beta subunits. In Methylobacillus flagellatus (strain ATCC 51484 / DSM 6875 / VKM B-1610 / KT), this protein is ATP synthase subunit beta.